The primary structure comprises 1782 residues: A-kinase anchor protein 12 (1782 aa).

Disordered stretches follow at residues 1–53 (MGAG…DPAT), 71–169 (QDEL…QAND), 189–400 (KTEK…APLA), 421–886 (VSTV…ELSE), 938–1089 (EREV…LKKE), 1105–1134 (PFTQ…ESSE), 1157–1274 (AIPP…ADEK), and 1305–1355 (KGEG…HVNE). A lipid anchor (N-myristoyl glycine) is attached at Gly2. Phosphoserine is present on residues Ser11, Ser19, Ser28, Ser75, and Ser96. The span at 16-53 (PEGSSTPAEPEPSGGGPSAEAAPDTTADPAIAASDPAT) shows a compositional bias: low complexity. Positions 108–125 (GQRDSEDVSKRDSDKEMA) are enriched in basic and acidic residues. Residues 145-154 (IIEQIPSSES) show a composition bias toward low complexity. Ser154 is subject to Phosphoserine. Positions 157–168 (EELTQPTESQAN) are enriched in polar residues. 8 positions are modified to phosphoserine: Ser219, Ser248, Ser258, Ser280, Ser283, Ser286, Ser347, and Ser371. Residues 226–249 (ASKESEPKQSTEKPEETLKREQSH) are compositionally biased toward basic and acidic residues. Residues 266-557 (KEEGEEKQEK…TQVPADSPDS (292 aa)) form an involved in PKC-binding region. 2 stretches are compositionally biased toward basic and acidic residues: residues 315–347 (KPKE…EVAS) and 363–379 (ESAH…KVEL). Tyr374 is modified (phosphotyrosine). Phosphoserine occurs at positions 381 and 392. Positions 423 to 435 (TVEERTEEQKTEV) are enriched in basic and acidic residues. The span at 446–456 (ELVEMDAEPQE) shows a compositional bias: acidic residues. Basic and acidic residues predominate over residues 458–468 (EPAKELVKLKE). 2 positions are modified to phosphoserine: Ser483 and Ser505. Over residues 528-537 (LSGKKQKGKR) the composition is skewed to basic residues. Ser554, Ser557, Ser598, Ser612, Ser627, and Ser629 each carry phosphoserine. The AKAP CaM-binding 1 motif lies at 607–627 (VTPWASFKKMVTPKKRVRRPS). Residues 625-639 (RPSESDKEDELDKVK) show a composition bias toward basic and acidic residues. The span at 640–652 (SATLSSTESTASE) shows a compositional bias: low complexity. Phosphothreonine is present on Thr642. Ser644, Ser645, Ser648, and Ser651 each carry phosphoserine. Over residues 655 to 674 (EEMKGSVEEPKPEEPKRKVD) the composition is skewed to basic and acidic residues. Residues Ser696, Ser697, and Ser698 each carry the phosphoserine modification. Basic and acidic residues predominate over residues 708-724 (GGDHQKADEAGKDKETG). A compositionally biased stretch (polar residues) spans 739–749 (QGSSSPEQAGS). 3 positions are modified to phosphoserine: Ser749, Ser761, and Ser787. The short motif at 756–776 (VSTWESFKRLVTPRKKSKSKL) is the AKAP CaM-binding 2 element. The span at 792 to 803 (STPDTEPGKEES) shows a compositional bias: basic and acidic residues. Positions 801–821 (EESWVSIKKFIPGRRKKRPDG) match the AKAP CaM-binding 3 motif. Position 806 is a phosphoserine (Ser806). The segment covering 986-997 (GAEEGTEASAAE) has biased composition (low complexity). A Glycyl lysine isopeptide (Lys-Gly) (interchain with G-Cter in SUMO1) cross-link involves residue Lys1051. Residues 1072–1089 (AEAERPEEQAEASGLKKE) are compositionally biased toward basic and acidic residues. Over residues 1164 to 1174 (ETPTDSETDGS) the composition is skewed to polar residues. 2 stretches are compositionally biased toward basic and acidic residues: residues 1187 to 1198 (QKDEIVEIHEEN) and 1231 to 1251 (EETK…KEVS). Residues 1253–1267 (ETVSILSKTEGTQEA) are compositionally biased toward polar residues. Residues Ser1328 and Ser1331 each carry the phosphoserine modification. The segment covering 1333-1355 (VEREMVVQVEREKTEAEPTHVNE) has biased composition (basic and acidic residues). Ser1391 and Ser1395 each carry phosphoserine. Residues 1541–1554 (ELETKSSKLVQNII) are RII-binding. The segment at 1584 to 1782 (KADSQDAGQE…ESAKSELTES (199 aa)) is disordered. Position 1587 is a phosphoserine (Ser1587). Polar residues predominate over residues 1603-1612 (ASAQDETPIT). 2 stretches are compositionally biased toward basic and acidic residues: residues 1629-1639 (DISKDMSEASE) and 1675-1699 (VPED…KEDE). A Phosphoserine modification is found at Ser1727. 2 stretches are compositionally biased toward basic and acidic residues: residues 1734–1757 (KQKE…ESDK) and 1766–1782 (ELQK…LTES).

As to quaternary structure, binds to dimeric RII-alpha regulatory subunit of PKC. In terms of tissue distribution, expressed in endothelial cells, cultured fibroblasts and osteosarcoma, but not in platelets, leukocytes, monocytic cell lines or peripherical blood cells.

Its subcellular location is the cytoplasm. It is found in the cell cortex. The protein resides in the cytoskeleton. It localises to the membrane. Its function is as follows. Anchoring protein that mediates the subcellular compartmentation of protein kinase A (PKA) and protein kinase C (PKC). In Homo sapiens (Human), this protein is A-kinase anchor protein 12 (AKAP12).